The primary structure comprises 183 residues: Peptidyl-tRNA hydrolase (183 aa).

Residue Y15 participates in tRNA binding. The active-site Proton acceptor is H20. Positions 67 and 69 each coordinate tRNA.

It belongs to the PTH family. As to quaternary structure, monomer.

Its subcellular location is the cytoplasm. The catalysed reaction is an N-acyl-L-alpha-aminoacyl-tRNA + H2O = an N-acyl-L-amino acid + a tRNA + H(+). Its function is as follows. Hydrolyzes ribosome-free peptidyl-tRNAs (with 1 or more amino acids incorporated), which drop off the ribosome during protein synthesis, or as a result of ribosome stalling. Functionally, catalyzes the release of premature peptidyl moieties from peptidyl-tRNA molecules trapped in stalled 50S ribosomal subunits, and thus maintains levels of free tRNAs and 50S ribosomes. This is Peptidyl-tRNA hydrolase from Chlamydia caviae (strain ATCC VR-813 / DSM 19441 / 03DC25 / GPIC) (Chlamydophila caviae).